Here is a 708-residue protein sequence, read N- to C-terminus: Fatty acid oxidation complex subunit alpha (708 aa).

The tract at residues 1–190 (MSQDKAFTME…KAGLVTEVVP (190 aa)) is enoyl-CoA hydratase. The 3-hydroxyacyl-CoA dehydrogenase stretch occupies residues 310–708 (DSVKRVGVLG…MLENGWNFYQ (399 aa)).

The protein in the N-terminal section; belongs to the enoyl-CoA hydratase/isomerase family. This sequence in the central section; belongs to the 3-hydroxyacyl-CoA dehydrogenase family. As to quaternary structure, heterotetramer of two alpha chains (FadJ) and two beta chains (FadI).

Its subcellular location is the cytoplasm. The enzyme catalyses a (3S)-3-hydroxyacyl-CoA = a (2E)-enoyl-CoA + H2O. It catalyses the reaction a 4-saturated-(3S)-3-hydroxyacyl-CoA = a (3E)-enoyl-CoA + H2O. The catalysed reaction is a (3S)-3-hydroxyacyl-CoA + NAD(+) = a 3-oxoacyl-CoA + NADH + H(+). It carries out the reaction (3S)-3-hydroxybutanoyl-CoA = (3R)-3-hydroxybutanoyl-CoA. It participates in lipid metabolism; fatty acid beta-oxidation. Its function is as follows. Catalyzes the formation of a hydroxyacyl-CoA by addition of water on enoyl-CoA. Also exhibits 3-hydroxyacyl-CoA epimerase and 3-hydroxyacyl-CoA dehydrogenase activities. The sequence is that of Fatty acid oxidation complex subunit alpha from Idiomarina loihiensis (strain ATCC BAA-735 / DSM 15497 / L2-TR).